The primary structure comprises 142 residues: MAVKIKLKRLGKIRSPHYRIVVADSRTRRDGRAIEEIGLYHPVQNPSRMEVDAERVAYWLGVGAQPTEPVLAILKKTGDWQKFKGEPAPAPLLVAAPKATRPSFDALGGDDAGKGEAITQKKKAEKKDEAAAESSSSESTEA.

The disordered stretch occupies residues 101 to 142; that stretch reads RPSFDALGGDDAGKGEAITQKKKAEKKDEAAAESSSSESTEA. Positions 132-142 are enriched in low complexity; it reads AESSSSESTEA.

The protein belongs to the bacterial ribosomal protein bS16 family.

The polypeptide is Small ribosomal subunit protein bS16 (Streptomyces avermitilis (strain ATCC 31267 / DSM 46492 / JCM 5070 / NBRC 14893 / NCIMB 12804 / NRRL 8165 / MA-4680)).